A 505-amino-acid polypeptide reads, in one-letter code: Deoxyguanosinetriphosphate triphosphohydrolase (505 aa).

The HD domain maps to Arg66–Cys273.

It belongs to the dGTPase family. Type 1 subfamily. Homotetramer. The cofactor is Mg(2+).

The enzyme catalyses dGTP + H2O = 2'-deoxyguanosine + triphosphate + H(+). Its function is as follows. dGTPase preferentially hydrolyzes dGTP over the other canonical NTPs. In Escherichia coli O157:H7, this protein is Deoxyguanosinetriphosphate triphosphohydrolase.